The sequence spans 1334 residues: Aldehyde oxidase 1 (1334 aa).

A 2Fe-2S ferredoxin-type domain is found at 5-92; that stretch reads PELLFYVNGR…GAAVTTVEGI (88 aa). The [2Fe-2S] cluster site is built by C44, C49, C52, and C74. Q113 is a binding site for Mo-molybdopterin. [2Fe-2S] cluster is bound by residues C114, C117, C149, and C151. C151 is a Mo-molybdopterin binding site. The 186-residue stretch at 236–421 folds into the FAD-binding PCMH-type domain; the sequence is FSGERMMWIS…ASVHIPYSRK (186 aa). FAD-binding positions include 264–271, A345, S354, H358, D367, and L411; that span reads VVMGNTSV. Mo-molybdopterin contacts are provided by residues 802 to 803 and M1043; that span reads AF. S1064 carries the phosphoserine modification. Residues 1084 to 1087, Q1199, and L1264 contribute to the Mo-molybdopterin site; that span reads GSVV. Residue E1266 is the Proton acceptor; for azaheterocycle hydroxylase activity of the active site.

The protein belongs to the xanthine dehydrogenase family. Homodimer. It depends on [2Fe-2S] cluster as a cofactor. Requires FAD as cofactor. Mo-molybdopterin serves as cofactor. In terms of processing, the N-terminus is blocked. Very high expression in liver and lung. High expression in kidney, pancreas, brain stem and spinal cord. Moderate expression in heart, testis, eye, cerebral cortex and cerebellum. Low expression in stomach and muscle.

The protein resides in the cytoplasm. It carries out the reaction an aldehyde + O2 + H2O = a carboxylate + H2O2 + H(+). The catalysed reaction is retinal + O2 + H2O = retinoate + H2O2 + H(+). It catalyses the reaction all-trans-retinal + O2 + H2O = all-trans-retinoate + H2O2 + H(+). With respect to regulation, inhibited by hydralazine and menadione. Not inhibited by BOF-4272 or allopurinol, xanthine dehydrogenase potent inhibitors. In contrast to guinea pig, human and rat, isovanillin is not an inhibitor but a substrate for AOX1 in rabbit. Oxidase with broad substrate specificity, oxidizing aromatic azaheterocycles, such as N1-methylnicotinamide, N-methylphthalazinium and phthalazine, as well as aldehydes, such as benzaldehyde, retinal, pyridoxal, and vanillin. Plays a key role in the metabolism of xenobiotics and drugs containing aromatic azaheterocyclic substituents. Participates in the bioactivation of prodrugs such as famciclovir, catalyzing the oxidation step from 6-deoxypenciclovir to penciclovir, which is a potent antiviral agent. Is probably involved in the regulation of reactive oxygen species homeostasis. May be a prominent source of superoxide generation via the one-electron reduction of molecular oxygen. May also catalyze nitric oxide (NO) production via the reduction of nitrite to NO with NADH or aldehyde as electron donor. May play a role in adipogenesis. Cannot use hypoxanthine and all-trans-retinol as substrate. In Oryctolagus cuniculus (Rabbit), this protein is Aldehyde oxidase 1.